Here is an 859-residue protein sequence, read N- to C-terminus: Linoleate 9S-lipoxygenase 1 (859 aa).

Residues 21–161 (VKGTVVLMKK…HYTTDRVFFS (141 aa)) form the PLAT domain. The region spanning 164-859 (TYLPHETPAT…GRGIPNSVSI (696 aa)) is the Lipoxygenase domain. The tract at residues 213-246 (KNPRPVLGGTQEYPYPRRGRTGRKPTKEDPQTES) is disordered. Residues His-519, His-524, His-711, Asn-715, and Ile-859 each coordinate Fe cation.

The protein belongs to the lipoxygenase family. Monomer. The cofactor is Fe cation. As to expression, seedlings, roots, leaves, and flowers (at protein level). Expressed in guard cells.

It is found in the cytoplasm. It carries out the reaction (9Z,12Z)-octadecadienoate + O2 = (9S)-hydroperoxy-(10E,12Z)-octadecadienoate. It catalyses the reaction (9Z,12Z,15Z)-octadecatrienoate + O2 = (9S)-hydroperoxy-(10E,12Z,15Z)-octadecatrienoate. Its pathway is lipid metabolism; oxylipin biosynthesis. 9S-lipoxygenase that can use linoleic acid or linolenic acid as substrates. Plant lipoxygenases may be involved in a number of diverse aspects of plant physiology including growth and development, pest resistance, and senescence or responses to wounding. Catalyzes the hydroperoxidation of lipids containing a cis,cis-1,4-pentadiene structure. Function as regulators of root development by controlling the emergence of lateral roots. 9S-lypoxygenase-derived oxylipins may play an antagonistic role to ethylene signaling in the control of responses involving oxidative stress, lipid peroxidation and plant defense. LOX1-derived oxylipins may be involved in stress signaling from roots to shoots in response to cadmium exposure. 9S-lypoxygenase-derived oxylipins are engaged during infection to control the balance between salicylic acid (SA) and jasmonate (JA) signaling to facilitate infection by the fungal pathogen Fusarium graminearum. 9S-lypoxygenase-derived oxylipins activate brassinosteroid signaling to promote cell wall-based defense and limit pathogen infection. The LOX1-derived compound (9S)-hydroperoxy-(10E,12Z,15Z)-octadecatrienoate protects plant tissues against infection by the bacterial pathogen Pseudomonas syringae pv tomato DC3000. The LOX1-derived oxylipins are required to trigger stomatal closure in response to both infection by the bacterial pathogen Pseudomonas syringae pv tomato DC3000, and the pathogen-associated molecular pattern (PAMP) flagellin peptide flg22. Contributes to the oxidation of free fatty acids during seed aging. The protein is Linoleate 9S-lipoxygenase 1 of Arabidopsis thaliana (Mouse-ear cress).